A 284-amino-acid polypeptide reads, in one-letter code: Pantothenate synthetase (284 aa).

30-37 is a binding site for ATP; sequence MGNLHEGH. The active-site Proton donor is the His37. Gln61 provides a ligand contact to (R)-pantoate. Beta-alanine is bound at residue Gln61. Residue 149–152 coordinates ATP; the sequence is GEKD. Gln155 is a binding site for (R)-pantoate. Residues Val178 and 186 to 189 contribute to the ATP site; that span reads LSSR.

This sequence belongs to the pantothenate synthetase family. In terms of assembly, homodimer.

The protein resides in the cytoplasm. The enzyme catalyses (R)-pantoate + beta-alanine + ATP = (R)-pantothenate + AMP + diphosphate + H(+). It participates in cofactor biosynthesis; (R)-pantothenate biosynthesis; (R)-pantothenate from (R)-pantoate and beta-alanine: step 1/1. Its function is as follows. Catalyzes the condensation of pantoate with beta-alanine in an ATP-dependent reaction via a pantoyl-adenylate intermediate. This chain is Pantothenate synthetase, found in Yersinia pestis bv. Antiqua (strain Antiqua).